The following is a 274-amino-acid chain: Non-heme haloperoxidase (274 aa).

The region spanning 22–254 (PIMFHHGWPL…RLKVYPGLSH (233 aa)) is the AB hydrolase-1 domain. Active-site residues include S95, D225, and H254.

Belongs to the AB hydrolase superfamily. Bacterial non-heme haloperoxidase / perhydrolase family.

The chain is Non-heme haloperoxidase (thcF) from Rhodococcus erythropolis (Arthrobacter picolinophilus).